We begin with the raw amino-acid sequence, 938 residues long: MAEKTDYKATLNMPRTDFPMRANLPTREPEQLKKWEEMDLYNLVQRATAGRPKFVLHDGPPYANGDIHLGTALNKILKDIIVKHATMAGYDAPYVPGWDMHGLPIELRALKDMNIDRRKIDPLELRAKCYEYAHHWLNVQREQFKRLGVRGDWENPYRTVAPEFEAKEVEVFGAMAAKGYIYRGLKPVYWCPYCETALAEAEIEYNEKTSYSIYVRFPVVDPRGKLPEGSYLVIWTTTPWTIPANLAVAVHPEVEYGVYATEKGNLVVATALAEKFFQAVNLPAAEPVATLKGADLEGITYRHLLYDRVSPVILGDHVTTEDGTGLVHTAPGHGHEDFEVGQKYGLPVLNPVNDQGVFTAEAGPFAGMFIEKANPEIIKALDEAGMLLGQGKIRHQYAHCWRCKNPVIYRATVQWFVKVEGFMDIAKEAMNHVRWIPDWGYNRMYAMIDGLADWCISRQRAWGLPIPILTCSACDEPSFEPKMFEKIAEIFRAEGSDAWWRRPAEDFMPEGGLTCKKCGGRTFHKEKDILDVWFDSGSSHVGVLETRPELTWPADLYLEGSDQHRGWFKSSLLTAVVARDGKPPYKAVLTHGFTVDEQGRKMSKSLGNVVDPADVIKRYGADILRLWVASTDYRHDMALSENILKQVADAYRKIRNTLRYLLGNLYDFNPDTDMVERDDLLEIDRWQMHRLQEVIRKVTEAYREYEYHIVYHTLNNYCAVDLSAVYLDILKDRLYTSAPASRERRSAQTVLYHVADALIRMLTPILTFTAEEAYSHLPKPAGSPPTSQLLMMPQPDPAYLDENLAAEWDRLMELRDAVQVVLERARVDKLIGSSQEAAVNLYASGGEGSWAELLDRHLPDLPSIFIVSDVKLFVGGQSAPSGTYFGEGPGDLSVEVVRAEGEKCERCWNYRKVGAIEQHPTLCERCAGVVLSLNLDNA.

The short motif at 61-71 is the 'HIGH' region element; the sequence is PYANGDIHLGT. Glu559 contacts L-isoleucyl-5'-AMP. Residues 601-605 carry the 'KMSKS' region motif; it reads KMSKS. Position 604 (Lys604) interacts with ATP. Cys904, Cys907, Cys923, and Cys926 together coordinate Zn(2+).

It belongs to the class-I aminoacyl-tRNA synthetase family. IleS type 1 subfamily. As to quaternary structure, monomer. The cofactor is Zn(2+).

Its subcellular location is the cytoplasm. The catalysed reaction is tRNA(Ile) + L-isoleucine + ATP = L-isoleucyl-tRNA(Ile) + AMP + diphosphate. Its function is as follows. Catalyzes the attachment of isoleucine to tRNA(Ile). As IleRS can inadvertently accommodate and process structurally similar amino acids such as valine, to avoid such errors it has two additional distinct tRNA(Ile)-dependent editing activities. One activity is designated as 'pretransfer' editing and involves the hydrolysis of activated Val-AMP. The other activity is designated 'posttransfer' editing and involves deacylation of mischarged Val-tRNA(Ile). This chain is Isoleucine--tRNA ligase, found in Symbiobacterium thermophilum (strain DSM 24528 / JCM 14929 / IAM 14863 / T).